Consider the following 510-residue polypeptide: P-(S)-hydroxymandelonitrile lyase (510 aa).

The first 34 residues, 1–34, serve as a signal peptide directing secretion; that stretch reads MAVFISSSGSPGRATATTTTTTTLLLAVLAAAAA. 116 to 118 provides a ligand contact to substrate; it reads NGG. 3 disulfide bridges follow: Cys121/Cys377, Cys277/Cys289, and Cys313/Cys344. Asn172 carries an N-linked (GlcNAc...) asparagine glycan. 212-213 serves as a coordination point for substrate; it reads ES. Ser213 is a catalytic residue. An N-linked (GlcNAc...) asparagine glycan is attached at Asn365. Catalysis depends on residues Asp414 and His469. 465-469 provides a ligand contact to substrate; sequence SGAGH.

This sequence belongs to the peptidase S10 family. In terms of assembly, heterotetramer of two A and two B chains. The A and B chains are linked by a disulfide bond. Post-translationally, the N-terminus of chain A is blocked. In terms of tissue distribution, primary leaves of seedlings.

It carries out the reaction (S)-4-hydroxymandelonitrile = 4-hydroxybenzaldehyde + hydrogen cyanide. In terms of biological role, involved in cyanogenesis, the release of HCN from injured tissues. Is involved in the catabolism of the cyanogenic glycoside dhurrin. This is P-(S)-hydroxymandelonitrile lyase from Sorghum bicolor (Sorghum).